An 83-amino-acid chain; its full sequence is RNA-binding protein Hfq (83 aa).

One can recognise a Sm domain in the interval 11 to 71 (DTFLNHVRKN…ISTIMPGHPV (61 aa)).

This sequence belongs to the Hfq family. As to quaternary structure, homohexamer.

In terms of biological role, RNA chaperone that binds small regulatory RNA (sRNAs) and mRNAs to facilitate mRNA translational regulation in response to envelope stress, environmental stress and changes in metabolite concentrations. Also binds with high specificity to tRNAs. This Methylobacterium radiotolerans (strain ATCC 27329 / DSM 1819 / JCM 2831 / NBRC 15690 / NCIMB 10815 / 0-1) protein is RNA-binding protein Hfq.